We begin with the raw amino-acid sequence, 332 residues long: MSTKEKLISHVSKEEAVGSRNKVTVVGVGMVGMASAISILLKDLCDELALVDVMEDKLKGEVMDLQHGSLFLKTHKIVADKDYSVTANSRVVVVTAGARQQEGESRLNLVQRNVNIFKFIIPNIVKYSPNCILMVVSNPVDILTYVAWKLSGFPRHRVIGSGTNLDSARFRHIMGEKLHLHPSSCHGWIVGEHGDSSVPVWSGVNVAGVSLQTLNPKMGAEGDSENWKAVHKMVVDGAYEVIKLKGYTSWAIGMSVADLVESIVKNLHKVHPVSTLVKGMHGVKDEVFLSVPCVLGNSGLTDVIHMTLKADEEKQLVKSAETLWGVQKELTL.

NAD(+) is bound by residues 29 to 57 (GMVG…MEDK) and Arg-99. 3 residues coordinate substrate: Arg-106, Asn-138, and Arg-169. Asn-138 serves as a coordination point for NAD(+). The Proton acceptor role is filled by His-193. Thr-248 provides a ligand contact to substrate.

Belongs to the LDH/MDH superfamily. LDH family. As to quaternary structure, homotetramer.

It is found in the cytoplasm. It carries out the reaction (S)-lactate + NAD(+) = pyruvate + NADH + H(+). It participates in fermentation; pyruvate fermentation to lactate; (S)-lactate from pyruvate: step 1/1. Its function is as follows. Interconverts simultaneously and stereospecifically pyruvate and lactate with concomitant interconversion of NADH and NAD(+). This chain is L-lactate dehydrogenase A chain (ldha), found in Gillichthys seta (Shortjaw mudsucker).